The primary structure comprises 345 residues: Anthranilate phosphoribosyltransferase (345 aa).

Residues glycine 79, 82–83, threonine 87, 89–92, 106–114, and serine 118 contribute to the 5-phospho-alpha-D-ribose 1-diphosphate site; these read GD, NVST, and KHGNRAVSG. Glycine 79 is an anthranilate binding site. Serine 91 contacts Mg(2+). Anthranilate is bound at residue asparagine 109. Anthranilate is bound at residue arginine 164. 2 residues coordinate Mg(2+): aspartate 223 and glutamate 224.

The protein belongs to the anthranilate phosphoribosyltransferase family. Homodimer. Mg(2+) serves as cofactor.

It carries out the reaction N-(5-phospho-beta-D-ribosyl)anthranilate + diphosphate = 5-phospho-alpha-D-ribose 1-diphosphate + anthranilate. The protein operates within amino-acid biosynthesis; L-tryptophan biosynthesis; L-tryptophan from chorismate: step 2/5. Catalyzes the transfer of the phosphoribosyl group of 5-phosphorylribose-1-pyrophosphate (PRPP) to anthranilate to yield N-(5'-phosphoribosyl)-anthranilate (PRA). The polypeptide is Anthranilate phosphoribosyltransferase (Saccharolobus islandicus (strain M.16.27) (Sulfolobus islandicus)).